The following is a 459-amino-acid chain: MIVTRFAPSPTGYLHIGGLRTALYNYLYARANNGKFLLRIEDTDLKRNSEEATQAIKEAFAWCKLDHDGEVTYQSKRFDLYKEYVKKLLDEGKAYKCYMSKEELEELRASQEARKERPKYDNRYRDFTGTPPAGIEPVIRIKAPLSGEIVIHDGIKGEVKFKVEDILDDFIIARSDGTPTYNFTVVIDDALMGVTDVIRGDDHLSNTPKQIVLYEALGFKVPKFYHVAMINGEDGKKLSKRHGATDVMEYKKMGYLPEALLNFLVRLGWSHGDDEIFTIEDMLKYFNPNDINKSSSTYNAQKLDWLNSHYIKTLPYERLAHDMLEFGVDFKALVKGELLLNSLRERSKTLIEMANSANAIINAPKSYDEKAWAKFINENSKEILAKFAQILDRDLDAKGYEELTNKFLEQNGLKLKDLAQALRIALTGSSVSPSIFEVLEVVGSNEIKNRIQNLLKEEK.

The short motif at Pro-8–Gly-18 is the 'HIGH' region element. Positions Lys-237–Arg-241 match the 'KMSKS' region motif. An ATP-binding site is contributed by Lys-240.

The protein belongs to the class-I aminoacyl-tRNA synthetase family. Glutamate--tRNA ligase type 1 subfamily. As to quaternary structure, monomer.

The protein resides in the cytoplasm. It catalyses the reaction tRNA(Glu) + L-glutamate + ATP = L-glutamyl-tRNA(Glu) + AMP + diphosphate. Functionally, catalyzes the attachment of glutamate to tRNA(Glu) in a two-step reaction: glutamate is first activated by ATP to form Glu-AMP and then transferred to the acceptor end of tRNA(Glu). The polypeptide is Glutamate--tRNA ligase 2 (Campylobacter concisus (strain 13826)).